The primary structure comprises 108 residues: Putative pterin-4-alpha-carbinolamine dehydratase (108 aa).

This sequence belongs to the pterin-4-alpha-carbinolamine dehydratase family.

It carries out the reaction (4aS,6R)-4a-hydroxy-L-erythro-5,6,7,8-tetrahydrobiopterin = (6R)-L-erythro-6,7-dihydrobiopterin + H2O. The sequence is that of Putative pterin-4-alpha-carbinolamine dehydratase from Chromobacterium violaceum (strain ATCC 12472 / DSM 30191 / JCM 1249 / CCUG 213 / NBRC 12614 / NCIMB 9131 / NCTC 9757 / MK).